Reading from the N-terminus, the 162-residue chain is ATP synthase subunit b (162 aa).

The helical transmembrane segment at 6–25 (TLFTLVTFLVLMLAVGKVAW) threads the bilayer.

Belongs to the ATPase B chain family. As to quaternary structure, F-type ATPases have 2 components, F(1) - the catalytic core - and F(0) - the membrane proton channel. F(1) has five subunits: alpha(3), beta(3), gamma(1), delta(1), epsilon(1). F(0) has three main subunits: a(1), b(2) and c(10-14). The alpha and beta chains form an alternating ring which encloses part of the gamma chain. F(1) is attached to F(0) by a central stalk formed by the gamma and epsilon chains, while a peripheral stalk is formed by the delta and b chains.

It is found in the cell membrane. Its function is as follows. F(1)F(0) ATP synthase produces ATP from ADP in the presence of a proton or sodium gradient. F-type ATPases consist of two structural domains, F(1) containing the extramembraneous catalytic core and F(0) containing the membrane proton channel, linked together by a central stalk and a peripheral stalk. During catalysis, ATP synthesis in the catalytic domain of F(1) is coupled via a rotary mechanism of the central stalk subunits to proton translocation. Component of the F(0) channel, it forms part of the peripheral stalk, linking F(1) to F(0). The chain is ATP synthase subunit b from Lacticaseibacillus casei (strain BL23) (Lactobacillus casei).